Here is a 698-residue protein sequence, read N- to C-terminus: Serotransferrin (698 aa).

The signal sequence occupies residues 1–19; that stretch reads MRLAVGALLVCAVLGLCLA. Transferrin-like domains follow at residues 25-347 and 361-683; these read VRWC…NLRE and VKWC…NLRK. Intrachain disulfides connect Cys-28–Cys-67 and Cys-38–Cys-58. Arg-42 carries the post-translational modification Dimethylated arginine. Ser-51 is a glycosylation site (O-linked (GalNAc...) serine). 2 residues coordinate Fe(3+): Asp-82 and Tyr-114. 17 disulfides stabilise this stretch: Cys-137–Cys-213, Cys-156–Cys-350, Cys-177–Cys-193, Cys-180–Cys-198, Cys-190–Cys-196, Cys-246–Cys-260, Cys-358–Cys-615, Cys-364–Cys-396, Cys-374–Cys-387, Cys-421–Cys-693, Cys-437–Cys-656, Cys-469–Cys-542, Cys-493–Cys-684, Cys-503–Cys-517, Cys-514–Cys-525, Cys-582–Cys-596, and Cys-634–Cys-639. Thr-139, Arg-143, Ala-145, and Gly-146 together coordinate hydrogencarbonate. Tyr-207 contacts Fe(3+). Residue His-268 coordinates Fe(3+). A Phosphoserine; by FAM20C modification is found at Ser-389. Residue Asp-411 coordinates Fe(3+). N-linked (GlcNAc...) (complex) asparagine glycosylation occurs at Asn-432. Tyr-445 contributes to the Fe(3+) binding site. Hydrogencarbonate is bound by residues Thr-471, Arg-475, Ala-477, and Gly-478. Asn-491 is a glycosylation site (N-linked (GlcNAc...) asparagine; atypical; partial). Tyr-536 contributes to the Fe(3+) binding site. His-604 lines the Fe(3+) pocket. N-linked (GlcNAc...) (complex) asparagine glycosylation is present at Asn-630. Position 685 is a phosphoserine; by FAM20C (Ser-685).

It belongs to the transferrin family. Monomer. Part of a complex composed of SLC40A1/ferroportin, TF/transferrin and HEPH/hephaestin that transfers iron from cells to transferrin. In terms of assembly, (Microbial infection) Binds to Neisseria transferrin-binding protein A (tbpA or tbp1). Forms a large complex with TbpA and TbpB. As to quaternary structure, (Microbial infection) Binds to Neisseria transferrin-binding protein B (tbpb or tbp2). As to expression, expressed by the liver and secreted in plasma.

Its subcellular location is the secreted. Transferrins are iron binding transport proteins which can bind two Fe(3+) ions in association with the binding of an anion, usually bicarbonate. It is responsible for the transport of iron from sites of absorption and heme degradation to those of storage and utilization. Serum transferrin may also have a further role in stimulating cell proliferation. In terms of biological role, (Microbial infection) Serves as an iron source for Neisseria species, which capture the protein and extract its iron for their own use. Its function is as follows. (Microbial infection) Serves as an iron source for parasite T.brucei (strain 427), which capture TF via its own transferrin receptor ESAG6:ESAG7 and extract its iron for its own use. This Homo sapiens (Human) protein is Serotransferrin.